The chain runs to 132 residues: Small ribosomal subunit protein uS9 (132 aa).

Belongs to the universal ribosomal protein uS9 family.

This chain is Small ribosomal subunit protein uS9 (rpsI), found in Mycoplasma genitalium (strain ATCC 33530 / DSM 19775 / NCTC 10195 / G37) (Mycoplasmoides genitalium).